Here is a 57-residue protein sequence, read N- to C-terminus: Large ribosomal subunit protein bL32 (57 aa).

The tract at residues 1 to 37 is disordered; the sequence is MAVQQNKPTRSKRGMRRSHDALTAVTSLSVDKTSGEK.

It belongs to the bacterial ribosomal protein bL32 family.

This chain is Large ribosomal subunit protein bL32, found in Escherichia fergusonii (strain ATCC 35469 / DSM 13698 / CCUG 18766 / IAM 14443 / JCM 21226 / LMG 7866 / NBRC 102419 / NCTC 12128 / CDC 0568-73).